Here is a 483-residue protein sequence, read N- to C-terminus: Serine hydroxymethyltransferase, cytosolic (483 aa).

At K257 the chain carries N6-(pyridoxal phosphate)lysine.

The protein belongs to the SHMT family. In terms of assembly, homotetramer. Identified in complex with ABRAXAS2 and the other subunits of the BRISC complex, at least composed of ABRAXAS2, BRCC3/BRCC36, BABAM2 and BABAM1/NBA1. The cofactor is pyridoxal 5'-phosphate.

The protein resides in the cytoplasm. The catalysed reaction is (6R)-5,10-methylene-5,6,7,8-tetrahydrofolate + glycine + H2O = (6S)-5,6,7,8-tetrahydrofolate + L-serine. It participates in one-carbon metabolism; tetrahydrofolate interconversion. Interconversion of serine and glycine. The protein is Serine hydroxymethyltransferase, cytosolic (SHMT1) of Pongo abelii (Sumatran orangutan).